A 176-amino-acid polypeptide reads, in one-letter code: Adenine phosphoribosyltransferase (176 aa).

It belongs to the purine/pyrimidine phosphoribosyltransferase family. In terms of assembly, homodimer.

Its subcellular location is the cytoplasm. It catalyses the reaction AMP + diphosphate = 5-phospho-alpha-D-ribose 1-diphosphate + adenine. The protein operates within purine metabolism; AMP biosynthesis via salvage pathway; AMP from adenine: step 1/1. Catalyzes a salvage reaction resulting in the formation of AMP, that is energically less costly than de novo synthesis. The chain is Adenine phosphoribosyltransferase from Leuconostoc mesenteroides subsp. mesenteroides (strain ATCC 8293 / DSM 20343 / BCRC 11652 / CCM 1803 / JCM 6124 / NCDO 523 / NBRC 100496 / NCIMB 8023 / NCTC 12954 / NRRL B-1118 / 37Y).